The chain runs to 493 residues: FAD-linked oxidoreductase tazL (493 aa).

Residues 1–17 (MRSNTVILAALPLVASA) form the signal peptide. Residues N29, N41, N53, N91, N253, N318, and N387 are each glycosylated (N-linked (GlcNAc...) asparagine). Residues 63 to 235 (WAEPTFAVTI…TSATYEIFDA (173 aa)) enclose the FAD-binding PCMH-type domain.

It belongs to the oxygen-dependent FAD-linked oxidoreductase family.

Its pathway is secondary metabolite biosynthesis. FAD-linked oxidoreductase; part of the gene cluster that mediates the biosynthesis of azaterrilone A and other azaphilones, a class of fungal metabolites characterized by a highly oxygenated pyrano-quinone bicyclic core and exhibiting a broad range of bioactivities. The first step of the pathway begins with the non-reducing polyketide synthase tazA that assembles one acetyl-CoA starter unit, five malonyl-CoA units, and catalyzes a series of Claisen condensations, methylation, PT-mediated cyclization, and finally releases the first hexaketide precursor through the R-domain. The tazA product then undergoes reduction on its terminal ketone and the following pyran-ring formation by yet undetermined enzyme(s). Dehydration and enoyl reduction, possibly involving the trans-enoyl reductase tazE leads to the next intermediate. TazD is predicted as an acetyltransferase and might catalyze the acetylation steps leading to the synthesis of azaterrilone A. Azaterrilone A is not the final product of the taz pathway and both the highly reducing polyketide synthase tazB and the dual enzyme tazHJ catalyze late steps of the pathway, leading to the production of the 2 final stereoisomers that contain additional polyketide modification whose structures have still to be determined. In Aspergillus terreus (strain NIH 2624 / FGSC A1156), this protein is FAD-linked oxidoreductase tazL.